The following is a 224-amino-acid chain: Ribose-5-phosphate isomerase A (224 aa).

Substrate-binding positions include 26–29 (TGST), 82–85 (DGAD), and 95–98 (KGGG). The active-site Proton acceptor is the Glu-104. Lys-122 contacts substrate.

It belongs to the ribose 5-phosphate isomerase family. Homodimer.

It catalyses the reaction aldehydo-D-ribose 5-phosphate = D-ribulose 5-phosphate. It participates in carbohydrate degradation; pentose phosphate pathway; D-ribose 5-phosphate from D-ribulose 5-phosphate (non-oxidative stage): step 1/1. Functionally, catalyzes the reversible conversion of ribose-5-phosphate to ribulose 5-phosphate. The sequence is that of Ribose-5-phosphate isomerase A from Lactococcus lactis subsp. cremoris (strain MG1363).